The following is a 191-amino-acid chain: Bcl-2-like protein 10 (191 aa).

Positions 79–98 match the BH1 motif; that stretch reads LSKDQDFSWSQLVMLLAFAG. Lys112 is covalently cross-linked (Glycyl lysine isopeptide (Lys-Gly) (interchain with G-Cter in ubiquitin)). The short motif at 144 to 155 is the BH2 element; sequence RLEALGGWDGFC. A helical membrane pass occupies residues 166 to 183; that stretch reads FWRRLLIQAFLSGFFATA.

The protein belongs to the Bcl-2 family. As to quaternary structure, interacts with BAX. Interacts with BCL2 and BCL2L1/BCLX. Interacts with APAF1. Interacts with ITPR1, ITPR2 and ITPR3; the interaction with ITPR1 is increased in the presence of AHCLY1. Interacts with AHCYL1. Interacts with HIP1R (via ENTH and I/LWEQ domains). Interacts with CASP9. Interacts with BCL2L11/BIM. Interacts with BIK. Interacts with UBQLN4. Interacts with NME2/NM23-H2. Interacts with PMAIP1/NOXA. Interacts with TPX2. Interacts with UBQLN1; in the cytoplasm. Interacts (via BH1 domain) with BECN1. It depends on Ca(2+) as a cofactor. Monoubiquitinated by UBQLN1; results in stabilization of BCL2L10 protein abundance and in relocalization from mitochondria to cytoplasm. As to expression, expressed in multiple embryonic tissues. Restricted to the ovary and testis in adult mice.

It localises to the mitochondrion. The protein localises to the nucleus membrane. The protein resides in the endoplasmic reticulum. Its subcellular location is the cytoplasm. It is found in the cytoskeleton. It localises to the spindle. Promotes cell survival by suppressing apoptosis induced by BAX but not BAK. Increases binding of AHCYL1/IRBIT to ITPR1. Reduces ITPR1-mediated calcium release from the endoplasmic reticulum cooperatively with AHCYL1/IRBIT under normal cellular conditions. Under apoptotic stress conditions, dissociates from ITPR1 and is displaced from mitochondria-associated endoplasmic reticulum membranes, leading to increased Ca(2+) transfer to mitochondria which promotes apoptosis. Required for the correct formation of the microtubule organizing center during oocyte cell division, potentially via regulation of protein abundance and localization of other microtubule organizing center components such as AURKA and TPX2. This is Bcl-2-like protein 10 from Mus musculus (Mouse).